The following is a 412-amino-acid chain: Phosphatidylinositol 3,4,5-trisphosphate 3-phosphatase and protein-tyrosine-phosphatase PTEN1 (412 aa).

The Phosphatase tensin-type domain occupies 42 to 211; it reads RRLIIGGYDL…KYWSDLLSFS (170 aa). C152 functions as the Phosphocysteine intermediate in the catalytic mechanism. Residues 239–396 enclose the C2 tensin-type domain; the sequence is VDSVFFVVSE…FSLELLFGPA (158 aa).

This sequence belongs to the PTEN phosphatase protein family. As to expression, expressed exclusively in pollen grains during the late stage of development (at protein level).

The catalysed reaction is O-phospho-L-tyrosyl-[protein] + H2O = L-tyrosyl-[protein] + phosphate. It carries out the reaction a 1,2-diacyl-sn-glycero-3-phospho-(1D-myo-inositol-3,4,5-trisphosphate) + H2O = a 1,2-diacyl-sn-glycero-3-phospho-(1D-myo-inositol-4,5-bisphosphate) + phosphate. With respect to regulation, inhibited by vanadate. In terms of biological role, protein tyrosine phosphatase that also exhibits lipid phosphatase activity. Can use phosphatidylinositol substrates such as PtdIns(3,4,5)P(3) as substrate. Pollen-specific phosphatase required for pollen development. In Arabidopsis thaliana (Mouse-ear cress), this protein is Phosphatidylinositol 3,4,5-trisphosphate 3-phosphatase and protein-tyrosine-phosphatase PTEN1.